We begin with the raw amino-acid sequence, 182 residues long: Putative manganese efflux pump MntP (182 aa).

6 helical membrane-spanning segments follow: residues 6–26, 37–57, 71–91, 101–121, 131–151, and 162–182; these read LIPL…VSLG, ILYI…IGMV, HFAG…SSIL, IGIS…SVGL, IITI…GLFI, and YGEI…LFPI.

It belongs to the MntP (TC 9.B.29) family.

The protein resides in the cell membrane. In terms of biological role, probably functions as a manganese efflux pump. This chain is Putative manganese efflux pump MntP, found in Bacillus cereus (strain ATCC 10987 / NRS 248).